The primary structure comprises 439 residues: Branched-chain amino acid permease BrnQ (439 aa).

Over 1–9 the chain is Cytoplasmic; sequence MTHQLKSRD. The helical transmembrane segment at 10 to 30 threads the bilayer; that stretch reads IIALGFMTFALFVGAGNIIFP. The Periplasmic portion of the chain corresponds to 31–43; sequence PMVGLQAGEHVWT. Residues 44–64 traverse the membrane as a helical segment; sequence AAIGFLITAVGLPVLTVVALA. Residues 65-79 lie on the Cytoplasmic side of the membrane; it reads KVGGGVDSLSTPIGK. The helical transmembrane segment at 80–100 threads the bilayer; it reads VAGLLLATVCYLAVGPLFATP. The Periplasmic portion of the chain corresponds to 101–118; sequence RTATVSFEVGIAPLTGDS. Residues 119–139 traverse the membrane as a helical segment; that stretch reads AMPLLIYSVVYFAIVILVSLY. At 140-149 the chain is on the cytoplasmic side; that stretch reads PGKLLDTVGN. The chain crosses the membrane as a helical span at residues 150 to 170; it reads FLAPLKIIALVILSVAAIVWP. The Periplasmic portion of the chain corresponds to 171–189; that stretch reads AGPISNALDAYQNAAFSNG. Residues 190–210 form a helical membrane-spanning segment; the sequence is FVNGYLTMDTLGAMVFGIVIV. The Cytoplasmic portion of the chain corresponds to 211–226; it reads NAARSRGVTEARLLTR. Residues 227–247 traverse the membrane as a helical segment; it reads YTVWAGLMAGVGLTLLYLALF. Topologically, residues 248-277 are periplasmic; the sequence is RLGSDSATLVDQSANGAAILHAYVQHTFGG. The chain crosses the membrane as a helical span at residues 278-298; that stretch reads AGSFLLAALIFIACLVTAVGL. Over 299–316 the chain is Cytoplasmic; sequence TCACAEFFAQYIPLSYRT. A helical membrane pass occupies residues 317–337; it reads LVFILGGFSMVVSNLGLSHLI. A topological domain (periplasmic) is located at residue glutamine 338. A helical membrane pass occupies residues 339 to 359; that stretch reads ISIPVLTAIYPPCIALVVLSF. Residues 360–369 are Cytoplasmic-facing; it reads TRSWWHNSTR. The helical transmembrane segment at 370–390 threads the bilayer; that stretch reads IIAPAMFISLLFGILDGIKAS. The Periplasmic portion of the chain corresponds to 391 to 404; sequence AFGDMLPAWSQRLP. A helical membrane pass occupies residues 405 to 425; that stretch reads LAEQGLAWLMPTVVMVILAII. Over 426–439 the chain is Cytoplasmic; that stretch reads WDRAAGRQVTSSAH.

It belongs to the branched chain amino acid transporter family.

The protein localises to the cell inner membrane. Liv-II branched chain amino acid transport system, which transports leucine, valine and isoleucine. The sequence is that of Branched-chain amino acid permease BrnQ from Salmonella typhimurium (strain LT2 / SGSC1412 / ATCC 700720).